A 429-amino-acid polypeptide reads, in one-letter code: Putative protease Do-like 14 (429 aa).

A disordered region spans residues 87-113; it reads KSEAPINDEKGVSVEASDSSSKPSNGY. The interval 113–338 is serine protease; that stretch reads YLGRDTIANA…IRPWIGLKMV (226 aa). Residues histidine 165, aspartate 203, and serine 281 each act as charge relay system in the active site. Residues 318 to 424 enclose the PDZ domain; sequence IIEHFKKSGR…RVTLEVIPEE (107 aa).

Belongs to the peptidase S1C family.

Putative serine protease. The polypeptide is Putative protease Do-like 14 (DEGP14) (Arabidopsis thaliana (Mouse-ear cress)).